The chain runs to 238 residues: CFA/I fimbrial subunit A (238 aa).

The N-terminal stretch at 1-19 is a signal peptide; the sequence is MHKLFYLLSLLMAPFVANA.

The protein localises to the fimbrium. Its function is as follows. Might function as a shuttle protein in the transport of fimbria through the periplasmic space or might function as an adhesin. In Escherichia coli, this protein is CFA/I fimbrial subunit A (cfaA).